The primary structure comprises 356 residues: Protein ATP1B4 (356 aa).

Residues 1–109 (MRRQLRSRRA…SLARTGQSRS (109 aa)) lie on the Nuclear side of the membrane. A disordered region spans residues 32–77 (LADEEEEAEEEAQVMMVPGLEEEEEEEEGKEEEEEREEEEGQGQST). Acidic residues-rich tracts occupy residues 33–43 (ADEEEEAEEEA) and 51–72 (LEEEEEEEEGKEEEEEREEEEG). The chain crosses the membrane as a helical; Signal-anchor for type II membrane protein span at residues 110–130 (LILVIYFFFYASLAAVITLFI). The Perinuclear space segment spans residues 131–356 (YMLFLAISPY…RIIFTLNIET (226 aa)).

It belongs to the X(+)/potassium ATPases subunit beta family. As to quaternary structure, does not associate with known Na,K-ATPase alpha-subunits. Associates with a SMAD7-transcriptional complex. Interacts with SNW1 and TOR1AIP1. In terms of tissue distribution, expressed in perinatal myocytes (at protein level). Expressed during postnatal development in skeletal muscle and heart.

The protein resides in the nucleus inner membrane. Its function is as follows. May act as a transcriptional coregulator during muscle development through its interaction with SNW1. Has lost its ancestral function as a Na,K-ATPase beta-subunit. The sequence is that of Protein ATP1B4 (Atp1b4) from Rattus norvegicus (Rat).